The sequence spans 209 residues: Mei4-dependent protein 1 (209 aa).

A signal peptide spans M1–S22.

The protein resides in the secreted. This chain is Mei4-dependent protein 1 (mde1), found in Schizosaccharomyces pombe (strain 972 / ATCC 24843) (Fission yeast).